The following is a 206-amino-acid chain: Ras-related protein Rab-18 (206 aa).

Met-1 bears the N-acetylmethionine mark. Residues Ser-17, Gly-20, Lys-21, Ser-22, Ser-23, Asp-34, Pro-35, Thr-40, Gly-66, Lys-123, and Asp-125 each contribute to the GTP site. Ser-22 is a Mg(2+) binding site. Short sequence motifs (switch) lie at residues 31 to 45 (DTFDPELAATIGVDF) and 63 to 80 (DTAGQERFRTLTPSYYRG). Thr-40 lines the Mg(2+) pocket. Ser-144 is modified (phosphoserine). Ala-152 is a binding site for GTP. Residue Cys-199 is the site of S-palmitoyl cysteine attachment. Cys-203 carries the post-translational modification Cysteine methyl ester. Cys-203 carries S-geranylgeranyl cysteine lipidation. Residues 204 to 206 (SVL) constitute a propeptide, removed in mature form.

It belongs to the small GTPase superfamily. Rab family. As to quaternary structure, interacts (in GTP-bound form) with ZFYVE1. Interacts with ZW10 and this interaction is enhanced in the presence of ZFYVE1. Interacts with BSCL2. Mg(2+) is required as a cofactor. As to expression, expression is high in the brain, moderate in the pituitary, and low in the liver. Detected in all tissues. Highly enriched on apical endocytic structures in polarized epithelial cells of kidney proximal tubules. Detected on both the apical and basolateral domains in epithelial cells of the intestine.

It localises to the endoplasmic reticulum membrane. The protein localises to the golgi apparatus. Its subcellular location is the cis-Golgi network membrane. The protein resides in the lipid droplet. It is found in the apical cell membrane. It carries out the reaction GTP + H2O = GDP + phosphate + H(+). Regulated by guanine nucleotide exchange factor (GEF) RAB3GAP1-RAB3GAP2 complex at the cis-Golgi membrane which promotes the exchange of bound GDP for free GTP. Regulated by GTPase activating protein (GAP) TBC1D20 at the ER membrane which increases the GTP hydrolysis activity. Inhibited by GDP dissociation inhibitors (GDIs) which prevent Rab-GDP dissociation. Its function is as follows. The small GTPases Rab are key regulators of intracellular membrane trafficking, from the formation of transport vesicles to their fusion with membranes. Rabs cycle between an inactive GDP-bound form and an active GTP-bound form that is able to recruit to membranes different sets of downstream effectors directly responsible for vesicle formation, movement, tethering and fusion. RAB18 is required for the localization of ZFYVE1 to lipid droplets and for its function in mediating the formation of endoplasmic reticulum-lipid droplets (ER-LD) contacts. Also required for maintaining endoplasmic reticulum structure. Plays a role in apical endocytosis/recycling. Plays a key role in eye and brain development and neurodegeneration. The sequence is that of Ras-related protein Rab-18 from Mus musculus (Mouse).